The sequence spans 386 residues: Probable dual-specificity RNA methyltransferase RlmN (386 aa).

Glu123 (proton acceptor) is an active-site residue. Residues 129–372 enclose the Radical SAM core domain; that stretch reads YPTRTTLCIS…ATLRDTRGQD (244 aa). An intrachain disulfide couples Cys136 to Cys377. 3 residues coordinate [4Fe-4S] cluster: Cys143, Cys147, and Cys150. S-adenosyl-L-methionine-binding positions include 198-199, Ser232, 255-257, and Asn334; these read GE and SLH. Cys377 acts as the S-methylcysteine intermediate in catalysis.

This sequence belongs to the radical SAM superfamily. RlmN family. [4Fe-4S] cluster is required as a cofactor.

It is found in the cytoplasm. It carries out the reaction adenosine(2503) in 23S rRNA + 2 reduced [2Fe-2S]-[ferredoxin] + 2 S-adenosyl-L-methionine = 2-methyladenosine(2503) in 23S rRNA + 5'-deoxyadenosine + L-methionine + 2 oxidized [2Fe-2S]-[ferredoxin] + S-adenosyl-L-homocysteine. The catalysed reaction is adenosine(37) in tRNA + 2 reduced [2Fe-2S]-[ferredoxin] + 2 S-adenosyl-L-methionine = 2-methyladenosine(37) in tRNA + 5'-deoxyadenosine + L-methionine + 2 oxidized [2Fe-2S]-[ferredoxin] + S-adenosyl-L-homocysteine. Specifically methylates position 2 of adenine 2503 in 23S rRNA and position 2 of adenine 37 in tRNAs. The protein is Probable dual-specificity RNA methyltransferase RlmN of Bifidobacterium adolescentis (strain ATCC 15703 / DSM 20083 / NCTC 11814 / E194a).